The sequence spans 459 residues: Chromosomal replication initiator protein DnaA (459 aa).

Positions 1-83 (MKNAREIWRN…NKLEIHFIEE (83 aa)) are domain I, interacts with DnaA modulators. Residues 83–121 (ESQAHKYAPADGSSNESIAVTETKEQPVLLPSKEEGDLG) are domain II. Positions 122 to 338 (QLNDKYIFET…GALTRVVAYA (217 aa)) are domain III, AAA+ region. Gly166, Gly168, Lys169, and Thr170 together coordinate ATP. Residues 339–459 (KLVGRPIDPD…IQTLKKALSN (121 aa)) are domain IV, binds dsDNA.

The protein belongs to the DnaA family. Oligomerizes as a right-handed, spiral filament on DNA at oriC.

The protein resides in the cytoplasm. Functionally, plays an essential role in the initiation and regulation of chromosomal replication. ATP-DnaA binds to the origin of replication (oriC) to initiate formation of the DNA replication initiation complex once per cell cycle. Binds the DnaA box (a 9 base pair repeat at the origin) and separates the double-stranded (ds)DNA. Forms a right-handed helical filament on oriC DNA; dsDNA binds to the exterior of the filament while single-stranded (ss)DNA is stabiized in the filament's interior. The ATP-DnaA-oriC complex binds and stabilizes one strand of the AT-rich DNA unwinding element (DUE), permitting loading of DNA polymerase. After initiation quickly degrades to an ADP-DnaA complex that is not apt for DNA replication. Binds acidic phospholipids. This is Chromosomal replication initiator protein DnaA from Exiguobacterium sp. (strain ATCC BAA-1283 / AT1b).